Consider the following 379-residue polypeptide: MESEKIYMTANPYLCTECGKGYTCLASLTQHQKTHIGEKPYECKICGKSFTRNSNLVQHQRIHTGEKPYECNECGKAFSQSTNLIQHQRVHTGEKPYECNECEKTFSHRSSLRNHERIHTGEKPYPCNECGKAFSHISALTQHHRIHTGKKPYECTECGKTFSRSTHLIEHQGIHSEEKSYQCKQCRKVFCHSTSLIRHQRTHTGEKPYECNECGKAFSHTPAFIQHQRIHTGEKPYECNACGKAFNRSAHLTEHQRTHTGEKPYVCKECGKTFSRSTHLTEHLKIHSCVKPYQCNECQKLFCYRTSLIRHQRTHTGEKPYQCNECGKSFSLSSALTKHKRIHTRERPYQCTKCGDVFCHSTSLIRHQKTHFRKETLAE.

C2H2-type zinc fingers lie at residues 13–35 (YLCT…QKTH), 41–63 (YECK…QRIH), 69–91 (YECN…QRVH), 97–119 (YECN…ERIH), 125–147 (YPCN…HRIH), 153–175 (YECT…QGIH), 181–203 (YQCK…QRTH), 209–231 (YECN…QRIH), 237–259 (YECN…QRTH), 265–287 (YVCK…LKIH), 293–315 (YQCN…QRTH), 321–343 (YQCN…KRIH), and 349–371 (YQCT…QKTH).

The protein belongs to the krueppel C2H2-type zinc-finger protein family.

It is found in the nucleus. Functionally, may be involved in transcriptional regulation. This Homo sapiens (Human) protein is Zinc finger protein 883 (ZNF883).